The primary structure comprises 132 residues: Mini-ribonuclease 3 (132 aa).

Asp-17 is an active-site residue.

This sequence belongs to the MrnC RNase family. In terms of assembly, homodimer. It depends on Mg(2+) as a cofactor.

The protein localises to the cytoplasm. Its function is as follows. Involved in correct processing of both the 5' and 3' ends of 23S rRNA precursor. Processes 30S rRNA precursor transcript even in absence of ribonuclease 3 (Rnc); Rnc processes 30S rRNA into smaller rRNA precursors. The chain is Mini-ribonuclease 3 from Enterococcus faecalis (strain ATCC 700802 / V583).